A 365-amino-acid polypeptide reads, in one-letter code: Cobalt-precorrin-5B C(1)-methyltransferase (365 aa).

It belongs to the CbiD family.

It carries out the reaction Co-precorrin-5B + S-adenosyl-L-methionine = Co-precorrin-6A + S-adenosyl-L-homocysteine. It participates in cofactor biosynthesis; adenosylcobalamin biosynthesis; cob(II)yrinate a,c-diamide from sirohydrochlorin (anaerobic route): step 6/10. In terms of biological role, catalyzes the methylation of C-1 in cobalt-precorrin-5B to form cobalt-precorrin-6A. In Variovorax paradoxus (strain S110), this protein is Cobalt-precorrin-5B C(1)-methyltransferase.